The sequence spans 467 residues: DEAD-box ATP-dependent RNA helicase CshA (467 aa).

Positions 2 to 30 (TTFQELGLSQEVMKAIERMGFEETTPIQA) match the Q motif motif. The 171-residue stretch at 33–203 (IPLSLQNKDV…ERFMNEPELV (171 aa)) folds into the Helicase ATP-binding domain. An ATP-binding site is contributed by 46–53 (AQTGTGKT). Positions 151–154 (DEAD) match the DEAD box motif. One can recognise a Helicase C-terminal domain in the interval 214–374 (NIQQYYLEVH…RMKPPTLDEA (161 aa)). The disordered stretch occupies residues 428–467 (TTPVQLTEEPPLAVKREKKRGGRPDGSARSRTKKRRITAH). A compositionally biased stretch (basic residues) spans 457–467 (SRTKKRRITAH).

It belongs to the DEAD box helicase family. CshA subfamily. Oligomerizes, may be a member of the RNA degradosome.

The protein localises to the cytoplasm. It catalyses the reaction ATP + H2O = ADP + phosphate + H(+). In terms of biological role, DEAD-box RNA helicase possibly involved in RNA degradation. Unwinds dsRNA in both 5'- and 3'-directions, has RNA-dependent ATPase activity. This Geobacillus kaustophilus (strain HTA426) protein is DEAD-box ATP-dependent RNA helicase CshA.